The primary structure comprises 1214 residues: MKQPIMADGPRCKRRKQANPRRKNVVNYDNVVDTGSETDEEDKLHIAEDDGIANPLDQETSPASVPNHESSPHVSQALLPREEEEDEIREGGVEHPWHNNEILQASVDGPEEMKEDYDTMGPEATIQTAINNGTVKNANCTSDFEEYFAKRKLEERDGHAVSIEEYLQRSDTAIIYPEAPEELSRLGTPEANGQEENDLPPGTPDAFAQLLTCPYCDRGYKRLTSLKEHIKYRHEKNEENFSCPLCSYTFAYRTQLERHMVTHKPGTDQHQMLTQGAGNRKFKCTECGKAFKYKHHLKEHLRIHSGEKPYECPNCKKRFSHSGSYSSHISSKKCIGLISVNGRMRNNIKTGSSPNSVSSSPTNSAITQLRNKLENGKPLSMSEQTGLLKIKTEPLDFNDYKVLMATHGFSGTSPFMNGGLGATSPLGVHPSAQSPMQHLGVGMEAPLLGFPTMNSNLSEVQKVLQIVDNTVSRQKMDCKAEEISKLKGYHMKDPCSQPEEQGVTSPNIPPVGLPVVSHNGATKSIIDYTLEKVNEAKACLQSLTTDSRRQISNIKKEKLRTLIDLVTDDKMIENHNISTPFSCQFCKESFPGPIPLHQHERYLCKMNEEIKAVLQPHENIVPNKAGVFVDNKALLLSSVLSEKGMTSPINPYKDHMSVLKAYYAMNMEPNSDELLKISIAVGLPQEFVKEWFEQRKVYQYSNSRSPSLERSSKPLAPNSNPPTKDSLLPRSPVKPMDSITSPSIAELHNSVTNCDPPLRLTKPSHFTNIKPVEKLDHSRSNTPSPLNLSSTSSKNSHSSSYTPNSFSSEELQAEPLDLSLPKQMKEPKSIIATKNKTKASSISLDHNSVSSSSENSDEPLNLTFIKKEFSNSNNLDNKSTNPVFSMNPFSAKPLYTALPPQSAFPPATFMPPVQTSIPGLRPYPGLDQMSFLPHMAYTYPTGAATFADMQQRRKYQRKQGFQGELLDGAQDYMSGLDDMTDSDSCLSRKKIKKTESGMYACDLCDKTFQKSSSLLRHKYEHTGKRPHQCQICKKAFKHKHHLIEHSRLHSGEKPYQCDKCGKRFSHSGSYSQHMNHRYSYCKREAEEREAAEREAREKGHLEPTELLMNRAYLQSITPQGYSDSEERESMPRDGESEKEHEKEGEDGYGKLGRQDGDEEFEEEEEESENKSMDTDPETIRDEEETGDHSMDDSSEDGKMETKSDHEEDNMEDGM.

The interval 1–101 is disordered; the sequence is MKQPIMADGP…GVEHPWHNNE (101 aa). Residues 12 to 24 are compositionally biased toward basic residues; the sequence is CKRRKQANPRRKN. Residues 57–74 are compositionally biased toward polar residues; that stretch reads DQETSPASVPNHESSPHV. Over residues 89 to 98 the composition is skewed to basic and acidic residues; that stretch reads REGGVEHPWH. Residue serine 142 is modified to Phosphoserine. 3 consecutive C2H2-type zinc fingers follow at residues 211–234, 241–263, and 282–304; these read LTCP…KYRH, FSCP…MVTH, and FKCT…LRIH. A C2H2-type 4; atypical zinc finger spans residues 310–334; the sequence is YECPNCKKRFSHSGSYSSHISSKKC. Residues serine 356, serine 360, and serine 364 each carry the phosphoserine modification. Lysine 377 carries the N6-acetyllysine modification. Lysine 391 participates in a covalent cross-link: Glycyl lysine isopeptide (Lys-Gly) (interchain with G-Cter in SUMO); alternate. Residue lysine 391 forms a Glycyl lysine isopeptide (Lys-Gly) (interchain with G-Cter in SUMO2); alternate linkage. The tract at residues 437–487 is SMAD-MH2 binding domain; the sequence is QHLGVGMEAPLLGFPTMNSNLSEVQKVLQIVDNTVSRQKMDCKAEEISKLK. Residues lysine 479 and lysine 555 each participate in a glycyl lysine isopeptide (Lys-Gly) (interchain with G-Cter in SUMO2) cross-link. Residues 581–605 form a C2H2-type 5; atypical zinc finger; that stretch reads FSCQFCKESFPGPIPLHQHERYLCK. Glycyl lysine isopeptide (Lys-Gly) (interchain with G-Cter in SUMO2) cross-links involve residues lysine 611 and lysine 632. Positions 644–703 form a DNA-binding region, homeobox; atypical; that stretch reads GMTSPINPYKDHMSVLKAYYAMNMEPNSDELLKISIAVGLPQEFVKEWFEQRKVYQYSNS. Serine 647 is modified (phosphoserine). The segment covering 702–715 has biased composition (low complexity); the sequence is NSRSPSLERSSKPL. Disordered regions lie at residues 702 to 740, 771 to 810, and 832 to 857; these read NSRS…DSIT, PVEK…SSEE, and ATKN…ENSD. Lysine 713 is covalently cross-linked (Glycyl lysine isopeptide (Lys-Gly) (interchain with G-Cter in SUMO2)). Residues serine 731 and serine 780 each carry the phosphoserine modification. Low complexity-rich tracts occupy residues 780–808 and 840–854; these read SNTP…SFSS and SSIS…SSSE. Threonine 782 is subject to Phosphothreonine. Residue serine 784 is modified to Phosphoserine. Lysine 866 participates in a covalent cross-link: Glycyl lysine isopeptide (Lys-Gly) (interchain with G-Cter in SUMO); alternate. Residue lysine 866 forms a Glycyl lysine isopeptide (Lys-Gly) (interchain with G-Cter in SUMO2); alternate linkage. 2 C2H2-type zinc fingers span residues 999 to 1021 and 1027 to 1049; these read YACD…KYEH and HQCQ…SRLH. The segment at 1055 to 1076 adopts a C2H2-type 8; atypical zinc-finger fold; sequence YQCDKCGKRFSHSGSYSQHMNH. The disordered stretch occupies residues 1117–1214; that stretch reads TPQGYSDSEE…HEEDNMEDGM (98 aa). Serine 1122 and serine 1124 each carry phosphoserine. A compositionally biased stretch (basic and acidic residues) spans 1127-1155; the sequence is RESMPRDGESEKEHEKEGEDGYGKLGRQD. Over residues 1156-1167 the composition is skewed to acidic residues; the sequence is GDEEFEEEEEES. Composition is skewed to basic and acidic residues over residues 1168-1179 and 1186-1205; these read ENKSMDTDPETI and GDHS…KSDH. A Phosphoserine modification is found at serine 1203.

This sequence belongs to the delta-EF1/ZFH-1 C2H2-type zinc-finger family. Binds activated SMAD1, activated SMAD2 and activated SMAD3; binding with SMAD4 is not detected. Interacts with CBX4 and CTBP1. In terms of processing, sumoylation on Lys-391 and Lys-866 is promoted by the E3 SUMO-protein ligase CBX4, and impairs interaction with CTBP1 and transcription repression activity.

It localises to the nucleus. Its subcellular location is the chromosome. In terms of biological role, transcriptional inhibitor that binds to DNA sequence 5'-CACCT-3' in different promoters. Represses transcription of E-cadherin. Represses expression of MEOX2. The chain is Zinc finger E-box-binding homeobox 2 from Homo sapiens (Human).